A 675-amino-acid chain; its full sequence is Probable potassium transport system protein Kup (675 aa).

A compositionally biased stretch (basic and acidic residues) spans 1-12 (MEPAMPEHDGDH). Residues 1–25 (MEPAMPEHDGDHASNPPHGVGIPND) form a disordered region. Transmembrane regions (helical) follow at residues 62–82 (ALLA…LYAL), 104–124 (LASL…VILI), 153–173 (WLFG…SIIT), 195–215 (IIIP…VLGT), 222–242 (FGPI…KGIF), 255–275 (FALE…GSVV), 300–320 (WLFF…ALLI), 332–352 (LLVP…ATVI), 390–410 (IYLP…VLAF), 419–439 (AYGI…MVVF), 450–470 (VAIV…ANVL), and 472–492 (IPDG…IMTT).

This sequence belongs to the HAK/KUP transporter (TC 2.A.72) family.

Its subcellular location is the cell inner membrane. It catalyses the reaction K(+)(in) + H(+)(in) = K(+)(out) + H(+)(out). Functionally, transport of potassium into the cell. Likely operates as a K(+):H(+) symporter. This chain is Probable potassium transport system protein Kup, found in Gluconobacter oxydans (strain 621H) (Gluconobacter suboxydans).